A 418-amino-acid polypeptide reads, in one-letter code: 4-hydroxy-3-methylbut-2-en-1-yl diphosphate synthase (flavodoxin) (418 aa).

Cys-305, Cys-308, Cys-351, and Glu-358 together coordinate [4Fe-4S] cluster.

Belongs to the IspG family. The cofactor is [4Fe-4S] cluster.

It carries out the reaction (2E)-4-hydroxy-3-methylbut-2-enyl diphosphate + oxidized [flavodoxin] + H2O + 2 H(+) = 2-C-methyl-D-erythritol 2,4-cyclic diphosphate + reduced [flavodoxin]. It participates in isoprenoid biosynthesis; isopentenyl diphosphate biosynthesis via DXP pathway; isopentenyl diphosphate from 1-deoxy-D-xylulose 5-phosphate: step 5/6. Its function is as follows. Converts 2C-methyl-D-erythritol 2,4-cyclodiphosphate (ME-2,4cPP) into 1-hydroxy-2-methyl-2-(E)-butenyl 4-diphosphate. The polypeptide is 4-hydroxy-3-methylbut-2-en-1-yl diphosphate synthase (flavodoxin) (Bartonella bacilliformis (strain ATCC 35685 / KC583 / Herrer 020/F12,63)).